Here is a 91-residue protein sequence, read N- to C-terminus: Kazal-type trypsin inhibitor (91 aa).

The N-terminal stretch at 1 to 22 is a signal peptide; that stretch reads MRHIGVFVGVLALALVLLVVEA. The Kazal-like domain maps to 25 to 78; sequence DAERGVCACPRIYMPVCGSNLKTYNNDCLLRCEINSDLGRANNLRKIADQACDN. Cystine bridges form between C31/C56, C33/C52, and C41/C76. N-linked (GlcNAc...) asparagine glycosylation is present at N78.

As to quaternary structure, interacts with human PLG (plasmin). As to expression, female salivary gland. Female gut at 3 and 24 hours after blood feeding. Female carcass. Male tissues. Not detected in ovary and fat body at 3 and 24 hours after blood feeding.

It is found in the secreted. Functionally, anticoagulant protein that decreases host thrombin (F2) activity via an uncompetitive inhibition mechanism. Inhibits amidolytic activity of host plasmin (PLG). Inhibits amidolytic activity of host trypsin. Inhibits trypsin-like endogenous activity from gut of female mosquitoes 24 hours after feeding and weakly affects enzyme activity from gut 3 hours after feeding, suggesting a possible role as an inhibitor of endogenous proteases. (Microbial infection) Limits host plasmin-mediated enhancement of dengue virus type 2 infection in mosquito midgut. The sequence is that of Kazal-type trypsin inhibitor from Aedes aegypti (Yellowfever mosquito).